A 146-amino-acid chain; its full sequence is D-aminoacyl-tRNA deacylase (146 aa).

Residues 137-138 carry the Gly-cisPro motif, important for rejection of L-amino acids motif; sequence GP.

This sequence belongs to the DTD family. In terms of assembly, homodimer.

The protein resides in the cytoplasm. It catalyses the reaction glycyl-tRNA(Ala) + H2O = tRNA(Ala) + glycine + H(+). The enzyme catalyses a D-aminoacyl-tRNA + H2O = a tRNA + a D-alpha-amino acid + H(+). An aminoacyl-tRNA editing enzyme that deacylates mischarged D-aminoacyl-tRNAs. Also deacylates mischarged glycyl-tRNA(Ala), protecting cells against glycine mischarging by AlaRS. Acts via tRNA-based rather than protein-based catalysis; rejects L-amino acids rather than detecting D-amino acids in the active site. By recycling D-aminoacyl-tRNA to D-amino acids and free tRNA molecules, this enzyme counteracts the toxicity associated with the formation of D-aminoacyl-tRNA entities in vivo and helps enforce protein L-homochirality. This is D-aminoacyl-tRNA deacylase from Psychrobacter sp. (strain PRwf-1).